A 938-amino-acid polypeptide reads, in one-letter code: Kinesin-like protein KIN-7B (938 aa).

In terms of domain architecture, Kinesin motor spans 29–348 (KILVTVRMRP…LSFAMSAKEV (320 aa)). 113–120 (GQTSSGKT) lines the ATP pocket. A coiled-coil region spans residues 357–431 (VVSEKKLLKH…DLERKAKERK (75 aa)). A disordered region spans residues 450–481 (TKEESIPSKSVPSSRRTARDRRKDNVRQSLTS). The stretch at 555 to 590 (KANLKEEINRLNSQEIAALEKKLECVQNTIDMLVSS) forms a coiled coil. The tract at residues 628–678 (CSPLSGTENKDPESNVVSANSAPVSFGATPPKRDDNRCRTQSREGTPVSRQ) is disordered. Residues 641–652 (SNVVSANSAPVS) show a composition bias toward low complexity. Basic and acidic residues predominate over residues 658–669 (PKRDDNRCRTQS).

It belongs to the TRAFAC class myosin-kinesin ATPase superfamily. Kinesin family. KIN-7 subfamily. Interacts with ANP3. Interacts with TIO/FU. In terms of tissue distribution, expressed in roots, stems, flowers, pollen mother cells and embryos.

The protein localises to the cytoplasm. It localises to the cytoskeleton. Its subcellular location is the phragmoplast. Functionally, probable plus end-directed motor protein that functions in the NACK-PQR (ANP3-MKK6-MPK4) MAP kinase signaling pathway, which is essential for somatic cell cytokinesis, especially for the cell-plate formation and its expansion. May regulate the activity and the localization of ANP3, probably by association through the non-catalytic region of the kinase. Functionally redundant with NACK1 and essential to promote the progression of cytokinesis and for cellularization (formation of the cell plate) during microgametogenesis and megagametogenesis. This chain is Kinesin-like protein KIN-7B, found in Arabidopsis thaliana (Mouse-ear cress).